The following is a 223-amino-acid chain: Noggin (223 aa).

The N-terminal stretch at 1–26 is a signal peptide; the sequence is MDPPRLRVATYLLLLSVGLLLHGGAC. An N-linked (GlcNAc...) asparagine glycan is attached at N61. Disulfide bonds link C143–C180, C166–C217, C172–C219, and C195–C204.

The protein belongs to the noggin family. As to quaternary structure, homodimer.

Its subcellular location is the secreted. Functionally, inhibitor of bone morphogenetic proteins (BMP) signaling. This is Noggin (nog) from Takifugu rubripes (Japanese pufferfish).